A 546-amino-acid chain; its full sequence is Probable T-complex protein 1 subunit theta (546 aa).

The segment at Met527 to Asp546 is disordered.

Belongs to the TCP-1 chaperonin family. In terms of assembly, heterooligomeric complex of about 850 to 900 kDa that forms two stacked rings, 12 to 16 nm in diameter.

The protein resides in the cytoplasm. Functionally, molecular chaperone; assists the folding of proteins upon ATP hydrolysis. Known to play a role, in vitro, in the folding of actin and tubulin. The protein is Probable T-complex protein 1 subunit theta (cct8) of Schizosaccharomyces pombe (strain 972 / ATCC 24843) (Fission yeast).